Here is a 472-residue protein sequence, read N- to C-terminus: Uronate isomerase (472 aa).

It belongs to the metallo-dependent hydrolases superfamily. Uronate isomerase family.

The catalysed reaction is D-glucuronate = D-fructuronate. It carries out the reaction aldehydo-D-galacturonate = keto-D-tagaturonate. The protein operates within carbohydrate metabolism; pentose and glucuronate interconversion. The sequence is that of Uronate isomerase from Xanthomonas euvesicatoria pv. vesicatoria (strain 85-10) (Xanthomonas campestris pv. vesicatoria).